The chain runs to 749 residues: Chaperone protein DnaK 1 (749 aa).

The residue at position 198 (threonine 198) is a Phosphothreonine; by autocatalysis. Composition is skewed to basic and acidic residues over residues 643–653 (RWDADPWDRSR), 661–694 (YDDRRSPVSDPYRGERWVEEQTSMSRREPVRDRN), and 711–724 (PTWEEDQPPRRDRS). The disordered stretch occupies residues 643–749 (RWDADPWDRS…GWDDDDDEWF (107 aa)). Residues 740–749 (GWDDDDDEWF) show a composition bias toward acidic residues.

This sequence belongs to the heat shock protein 70 family.

Acts as a chaperone. In Synechococcus sp. (strain ATCC 27144 / PCC 6301 / SAUG 1402/1) (Anacystis nidulans), this protein is Chaperone protein DnaK 1.